The following is a 330-amino-acid chain: Phosphate acyltransferase (330 aa).

It belongs to the PlsX family. As to quaternary structure, homodimer. Probably interacts with PlsY.

Its subcellular location is the cytoplasm. It catalyses the reaction a fatty acyl-[ACP] + phosphate = an acyl phosphate + holo-[ACP]. The protein operates within lipid metabolism; phospholipid metabolism. Its function is as follows. Catalyzes the reversible formation of acyl-phosphate (acyl-PO(4)) from acyl-[acyl-carrier-protein] (acyl-ACP). This enzyme utilizes acyl-ACP as fatty acyl donor, but not acyl-CoA. The chain is Phosphate acyltransferase from Bacillus cereus (strain AH820).